The sequence spans 175 residues: Beta-carotene hydroxylase (175 aa).

In terms of domain architecture, Fatty acid hydroxylase spans 11–136 (FVTVIGMEVI…RGKEGCVSFG (126 aa)).

The protein belongs to the sterol desaturase family.

The enzyme catalyses all-trans-beta-carotene + 4 reduced [2Fe-2S]-[ferredoxin] + 2 O2 + 4 H(+) = all-trans-zeaxanthin + 4 oxidized [2Fe-2S]-[ferredoxin] + 2 H2O. It participates in carotenoid biosynthesis; zeaxanthin biosynthesis. Its function is as follows. Catalyzes the hydroxylation reaction from beta-carotene to zeaxanthin. This is Beta-carotene hydroxylase (crtZ) from Pantoea ananas (Erwinia uredovora).